We begin with the raw amino-acid sequence, 877 residues long: GPI inositol-deacylase (877 aa).

Residues 35–55 (FLSRLFCALAVLFSYSIYQSF) traverse the membrane as a helical segment. The active site involves Ser-206. N-linked (GlcNAc...) asparagine glycans are attached at residues Asn-291, Asn-336, Asn-374, Asn-448, and Asn-473. The next 8 membrane-spanning stretches (helical) occupy residues 597–617 (VLAW…SDFI), 637–657 (MPIC…LPDF), 674–694 (PLVG…SFVI), 735–755 (VLVN…ILLW), 771–791 (ISTC…HVAI), 809–829 (NFYY…GGTI), 834–854 (VCLK…FSVG), and 857–877 (WTWI…ASII).

This sequence belongs to the GPI inositol-deacylase family.

The protein resides in the endoplasmic reticulum membrane. In terms of biological role, involved in inositol deacylation of GPI-anchored proteins which plays important roles in the quality control and ER-associated degradation of GPI-anchored proteins. This is GPI inositol-deacylase (BST1) from Cryptococcus neoformans var. neoformans serotype D (strain JEC21 / ATCC MYA-565) (Filobasidiella neoformans).